A 361-amino-acid polypeptide reads, in one-letter code: Beta-hexosaminidase (361 aa).

Substrate-binding positions include Asp-69, Arg-77, Arg-144, and 174–175; that span reads KH. The active-site Proton donor/acceptor is His-187. The active-site Nucleophile is the Asp-258.

The protein belongs to the glycosyl hydrolase 3 family. NagZ subfamily.

It is found in the cytoplasm. It catalyses the reaction Hydrolysis of terminal non-reducing N-acetyl-D-hexosamine residues in N-acetyl-beta-D-hexosaminides.. It functions in the pathway cell wall biogenesis; peptidoglycan recycling. Its function is as follows. Plays a role in peptidoglycan recycling by cleaving the terminal beta-1,4-linked N-acetylglucosamine (GlcNAc) from peptide-linked peptidoglycan fragments, giving rise to free GlcNAc, anhydro-N-acetylmuramic acid and anhydro-N-acetylmuramic acid-linked peptides. This is Beta-hexosaminidase from Neisseria meningitidis serogroup A / serotype 4A (strain DSM 15465 / Z2491).